Consider the following 57-residue polypeptide: High light-inducible protein HliD (57 aa).

A Chlorophyll-binding motif motif is present at residues 25–30 (EKLNGR). The helical transmembrane segment at 25-46 (EKLNGRAAMVGFLLILVIEYFT) threads the bilayer.

This sequence belongs to the Hlip family. In terms of assembly, probably forms dimers which bind 6 chlorophyll a and 2 beta-carotenoid molecules. Cofractionates in an approximately 50 kDa fraction of the thylakoid membrane with HliC. Does not associate with mature PSII. Purified in several chlorophyll- and carotenoid-containing complexes, including photosystem II (PSII) assembly intermediate complex RCII* (iD1, D1, D2, PsbE, PsbF, PsbI, Ycf39, Ycf48, HliC and HliD) and the Ycf39-Hlip complex (Ycf39, HliC, HliD and pigments).

It is found in the cellular thylakoid membrane. In terms of biological role, involved in photosystem II (PSII) assembly and/or repair under high light stress. Required for binding of chlorophyll and carotenoids by the Ycf39-Hlip complex. The Ycf39-Hlip complex binds D1 at an early stage of PSII assembly along with Ycf48, ribosomes and ChlG, the last enzyme in chlorophyll biosynthesis; it may be involved in chlorophyll reuse and delivery to D1 in the initial stages of PSII assembly. Binds chlorophyll a and beta-carotenoid in a 3:1 stoichiometry in the presence and absence of Yfc39; in the Ycf39-HliC-HliD complex, HliD binds all the pigment. The Ycf39-Hlip complex efficiently quenches chlorophyll fluorescence, contributing to photoprotection. Deletion of 4 to 5 members of the Hlip family suggests the proteins are involved in regulation of chlorophyll biosynthesis, in stabilization of chlorophyll-binding proteins and/or in reuse of chlorophylls, and may regulate tetrapyrrole biosynthesis. Might bind chlorophyll and/or carotenoids in association with HliC (called the ScpBE pair). The Hlips might regulate tetrapyrrole biosynthesis, maybe at the level of aminolevulinic acid synthesis and probably stabilize PSII assembly intermediates. This Synechocystis sp. (strain ATCC 27184 / PCC 6803 / Kazusa) protein is High light-inducible protein HliD (hliD).